Reading from the N-terminus, the 222-residue chain is uncharacterized protein (222 aa).

Transmembrane regions (helical) follow at residues 25 to 45, 80 to 100, 111 to 131, and 160 to 180; these read LLWL…PATA, LLGA…ALIY, FAIM…FPLL, and LALT…VPFF.

It localises to the cell membrane. This is an uncharacterized protein from Bacillus subtilis (strain 168).